A 594-amino-acid polypeptide reads, in one-letter code: Acyl-coenzyme A thioesterase 11 (594 aa).

Residues 1–20 (MIQNVGNHLRRGFASMFSNR) constitute a mitochondrion transit peptide. A phosphoserine mark is found at S15 and S25. A disordered region spans residues 20–43 (RTSRKSISHPESGDPPTMAEGEGY). Residues 45 to 157 (NPTEVQMSQL…LATFVAHREL (113 aa)) form the HotDog ACOT-type 1 domain. CoA contacts are provided by residues 93–95 (TAS), 122–124 (NSS), R183, and 272–274 (HFR). A HotDog ACOT-type 2 domain is found at 217–330 (EKTRVESVEL…FMTFVVLDKD (114 aa)). Positions 370–582 (KQAEVALSVP…FKACESFLLD (213 aa)) constitute an START domain.

Its subcellular location is the mitochondrion matrix. The protein localises to the cytoplasm. It catalyses the reaction hexadecanoyl-CoA + H2O = hexadecanoate + CoA + H(+). The catalysed reaction is tetradecanoyl-CoA + H2O = tetradecanoate + CoA + H(+). The enzyme catalyses dodecanoyl-CoA + H2O = dodecanoate + CoA + H(+). It carries out the reaction butanoyl-CoA + H2O = butanoate + CoA + H(+). It participates in lipid metabolism; fatty acid metabolism. In terms of biological role, has an acyl-CoA thioesterase activity with a preference for the long chain fatty acyl-CoA thioesters hexadecanoyl-CoA/palmitoyl-CoA and tetradecanoyl-CoA/myristoyl-CoA which are the main substrates in the mitochondrial beta-oxidation pathway. The sequence is that of Acyl-coenzyme A thioesterase 11 (Acot11) from Mus musculus (Mouse).